A 396-amino-acid polypeptide reads, in one-letter code: Elongation factor Tu 1 (396 aa).

A tr-type G domain is found at 10 to 206; sequence KPHVNVGTIG…TLDTYIPEPE (197 aa). The G1 stretch occupies residues 19–26; the sequence is GHVDHGKT. Residue 19–26 participates in GTP binding; sequence GHVDHGKT. Residue Thr26 participates in Mg(2+) binding. The interval 60-64 is G2; sequence GITIN. The G3 stretch occupies residues 81-84; it reads DCPG. Residues 81–85 and 136–139 contribute to the GTP site; these read DCPGH and NKCD. The tract at residues 136–139 is G4; the sequence is NKCD. The segment at 174–176 is G5; the sequence is SAL.

The protein belongs to the TRAFAC class translation factor GTPase superfamily. Classic translation factor GTPase family. EF-Tu/EF-1A subfamily. In terms of assembly, monomer.

The protein resides in the cytoplasm. The catalysed reaction is GTP + H2O = GDP + phosphate + H(+). Its function is as follows. GTP hydrolase that promotes the GTP-dependent binding of aminoacyl-tRNA to the A-site of ribosomes during protein biosynthesis. This chain is Elongation factor Tu 1, found in Psychrobacter sp. (strain PRwf-1).